The primary structure comprises 182 residues: MLDAFSRAVVSADSKGATIGSAELSSLRKYVADANKRIDATLAITQNVSCIAADAISGMVCENTGLTQPGGHCYPTRRMAACLRDGEIILRYVSYALLAGDPSVLDDRCINGLKETYIALGVPLSNAIRAIEIMKIATVAIMTETNSGRKMFEGINSGSGAECKDIASEAASYFDRVIDALN.

Cys82 is a (2R,3E)-phycoerythrobilin binding site.

The protein belongs to the phycobiliprotein family. In terms of assembly, homodimer. In terms of processing, contains one covalently linked phycoerythrobilin chromophore.

Functionally, green-light absorbing phycoerythrin of unknown function. The protein is R-phycoerythrin subunit beta (cpeB) of Prochlorococcus marinus (strain SARG / CCMP1375 / SS120).